The following is a 346-amino-acid chain: Heterogeneous nuclear ribonucleoprotein A1 (346 aa).

RRM domains are found at residues Arg23 to Glu123 and Lys114 to Ser191. 2 stretches are compositionally biased toward basic and acidic residues: residues Thr92 to Ser107 and Gly189 to Gln215. Disordered stretches follow at residues Thr92–Val111 and Gly189–Tyr346. Gly residues-rich tracts occupy residues Arg216 to Gly296 and Gly303 to Ser331. Residues Gly332 to Tyr346 are compositionally biased toward low complexity.

The protein resides in the nucleus. Its subcellular location is the chromosome. The protein localises to the telomere. This protein is a component of ribonucleosomes. Overexpression gradually increases telomere length, leading to increase lifespan. This chain is Heterogeneous nuclear ribonucleoprotein A1, found in Caenorhabditis elegans.